The chain runs to 194 residues: Probable GTP-binding protein EngB (194 aa).

In terms of domain architecture, EngB-type G spans 22–194 (DLPEYALAGR…AWQFIKEGME (173 aa)). GTP is bound by residues 30–37 (GRSNVGKS), 57–61 (GKTQT), 75–78 (DVPG), 142–145 (TKAD), and 174–176 (FSS). The Mg(2+) site is built by S37 and T59.

The protein belongs to the TRAFAC class TrmE-Era-EngA-EngB-Septin-like GTPase superfamily. EngB GTPase family. It depends on Mg(2+) as a cofactor.

Necessary for normal cell division and for the maintenance of normal septation. In Listeria innocua serovar 6a (strain ATCC BAA-680 / CLIP 11262), this protein is Probable GTP-binding protein EngB.